The following is a 250-amino-acid chain: Membrane-spanning 4-domains subfamily A member 8 (250 aa).

Topologically, residues 1 to 74 (MNSMTSAVPV…ALKEGKTLGA (74 aa)) are cytoplasmic. The chain crosses the membrane as a helical span at residues 75–95 (IQIIIGLAHIGLGSIMATVLV). At 96-98 (GEY) the chain is on the extracellular side. A helical membrane pass occupies residues 99–119 (LSISFYGGFPFWGGLWFIISG). Over 120-136 (SLSVAAENQPYSYCLLS) the chain is Cytoplasmic. The chain crosses the membrane as a helical span at residues 137 to 157 (GSLGLNIVSAICSAVGVILFI). Topologically, residues 158 to 180 (TDLSIPHPYAYPDYYPYAWGVNP) are extracellular. A helical transmembrane segment spans residues 181–201 (GMAISGVLLVFCLLEFGIACA). Topologically, residues 202-250 (SSHFGCQLVCCQSSNVSVIYPNIYAANPVITPEPVTSPPSYSSEIQANK) are cytoplasmic.

Belongs to the MS4A family. Expressed by hematopoietic tissues and cells lines.

It is found in the membrane. In terms of biological role, may be involved in signal transduction as a component of a multimeric receptor complex. This chain is Membrane-spanning 4-domains subfamily A member 8 (MS4A8), found in Homo sapiens (Human).